Here is a 267-residue protein sequence, read N- to C-terminus: Serine/arginine-rich splicing factor 1 (267 aa).

The 76-residue stretch at C16 to S91 folds into the RRM 1 domain. Disordered stretches follow at residues R90–R137 and K212–T267. A compositionally biased stretch (gly residues) spans R93–P127. The region spanning Y140–D214 is the RRM 2 domain. A compositionally biased stretch (basic residues) spans S224–T267.

Belongs to the splicing factor SR family.

Its subcellular location is the cytoplasm. The protein resides in the nucleus speckle. May play a role in preventing exon skipping, ensuring the accuracy of splicing and regulating alternative splicing. In Xenopus tropicalis (Western clawed frog), this protein is Serine/arginine-rich splicing factor 1 (srsf1).